Here is a 521-residue protein sequence, read N- to C-terminus: Cyclic AMP-responsive element-binding protein 3-like protein 2 (521 aa).

Residues 1 to 378 are Cytoplasmic-facing; the sequence is MEVLESGEQS…CKLAGTQTGT (378 aa). Ser-93 is subject to Phosphoserine. Lys-178 participates in a covalent cross-link: Glycyl lysine isopeptide (Lys-Gly) (interchain with G-Cter in SUMO2). At Ser-191 the chain carries Phosphoserine. The tract at residues 196-264 is disordered; it reads SVDQLHLPPT…PHKLQGSGPL (69 aa). Residues 208 to 220 are compositionally biased toward low complexity; it reads SSHSSDSEGSLSP. A bZIP domain is found at 294–357; it reads ALKKIRRKIK…RTLLQQLQKL (64 aa). The interval 296-325 is basic motif; sequence KKIRRKIKNKISAQESRRKKKEYMDSLEKK. The leucine-zipper stretch occupies residues 336–357; sequence LRKKVEVLENTNRTLLQQLQKL. A helical; Signal-anchor for type II membrane protein membrane pass occupies residues 379 to 399; the sequence is CLMVVVLCFAVAFGSLFQGYG. Residues 400–521 are Lumenal-facing; that stretch reads LYPSATKMAL…ELERRVNATF (122 aa). An S1P recognition motif is present at residues 427–430; it reads RNLL. Residues Asn-505 and Asn-518 are each glycosylated (N-linked (GlcNAc...) asparagine).

It belongs to the bZIP family. ATF subfamily. In terms of assembly, binds DNA as a dimer. In terms of processing, upon ER stress, translocated to the Golgi apparatus, where it is processed by regulated intramembrane proteolysis (RIP) to release the cytosol-facing N-terminal transcription factor domain. The cleavage is performed sequentially by site-1 and site-2 proteases (S1P/MBTPS1 and S2P/MBTPS2). N-glycosylated. Post-translationally, ubiquitinated by HRD1/SYVN1; undergoes 'Lys-48'-linked ubiquitination, followed by rapid proteasomal degradation under normal conditions. Upon ER stress, SYVN1 E3 ubiquitin-protein ligase dissociates from its substrate, ubiquitination does not occur and CREB3L2 is stabilized.

The protein localises to the endoplasmic reticulum membrane. Its subcellular location is the nucleus. Transcription factor involved in unfolded protein response (UPR). In the absence of endoplasmic reticulum (ER) stress, inserted into ER membranes, with N-terminal DNA-binding and transcription activation domains oriented toward the cytosolic face of the membrane. In response to ER stress, transported to the Golgi, where it is cleaved in a site-specific manner by resident proteases S1P/MBTPS1 and S2P/MBTPS2. The released N-terminal cytosolic domain is translocated to the nucleus to effect transcription of specific target genes. Plays a critical role in chondrogenesis by activating the transcription of SEC23A, which promotes the transport and secretion of cartilage matrix proteins, and possibly that of ER biogenesis-related genes. In a neuroblastoma cell line, protects cells from ER stress-induced death. In vitro activates transcription of target genes via direct binding to the CRE site. In Rattus norvegicus (Rat), this protein is Cyclic AMP-responsive element-binding protein 3-like protein 2 (Creb3l2).